The chain runs to 781 residues: Toll-like receptor 2 type-2 (781 aa).

A signal peptide spans Met1–Arg24. Residues Gln25–Ser585 lie on the Extracellular side of the membrane. A disulfide bond links Cys30 and Cys36. Asn37 is a glycosylation site (N-linked (GlcNAc...) asparagine). LRR repeat units follow at residues Lys53–Lys74, Asn77–Ser98, Lys101–Pro122, Ser125–Ser146, Asn150–Gly171, and Phe174–Ser195. Residue Asn109 is glycosylated (N-linked (GlcNAc...) asparagine). N-linked (GlcNAc...) asparagine glycosylation is found at Asn150, Asn184, Asn301, and Asn313. An intrachain disulfide couples Cys350 to Cys379. LRR repeat units follow at residues Ser358 to Ala378, Ser385 to Leu406, Asn411 to Pro432, Asn434 to Thr455, Leu456 to Pro474, Phe475 to Pro496, and Asn497 to Ser518. Asn390 carries an N-linked (GlcNAc...) asparagine glycan. Residues Cys429 and Cys451 are joined by a disulfide bond. Asn439 is a glycosylation site (N-linked (GlcNAc...) asparagine). In terms of domain architecture, LRRCT spans Asn530–Arg584. The helical transmembrane segment at Leu586–Gly606 threads the bilayer. Residues Tyr607–Ser781 are Cytoplasmic-facing. Positions Ile636–Leu779 constitute a TIR domain.

The protein belongs to the Toll-like receptor family. As to quaternary structure, binds MYD88 (via TIR domain). N-glycosylated. As to expression, highly expressed in ovary. Also detected in brain, heart, lung, liver, spleen and kidney, and at low levels in gizzard, muscle, testis and proventriculus.

The protein localises to the membrane. Its function is as follows. Participates in the innate immune response to microbial agents. Acts via MYD88 and TRAF6, leading to NF-kappa-B activation, cytokine secretion and the inflammatory response. Mediates the response to mycoplasmal macrophage-activating lipopeptide-2kD (MALP-2). This chain is Toll-like receptor 2 type-2 (TLR2-2), found in Gallus gallus (Chicken).